The following is a 258-amino-acid chain: MHRYKITFAYDGSNFAGFQIQPGERTVQQVLERAVNKIAKKPQPPLMVFGSGRTDAGVHALGQVAHFDLPYQIPGPSLVRALNSSLPLDVLVKEATEVAPDFHARFDAHHKRYRYRVVGGEFTNPFKRNYTGHYKYPVDVERMQTAAQDFVGEHDFTSFVASGSQATSNVRRIDEVTVVRDEENDEVVFDFVGNGFLYNQVRIMVAFLLEIGNGRRPVDDVMRVMKAKNRDLARGTAPASGLYLVEVTYDSPANSQND.

The Nucleophile role is filled by Asp-55. Tyr-113 contributes to the substrate binding site.

Belongs to the tRNA pseudouridine synthase TruA family. In terms of assembly, homodimer.

It catalyses the reaction uridine(38/39/40) in tRNA = pseudouridine(38/39/40) in tRNA. In terms of biological role, formation of pseudouridine at positions 38, 39 and 40 in the anticodon stem and loop of transfer RNAs. This is tRNA pseudouridine synthase A from Limosilactobacillus fermentum (strain NBRC 3956 / LMG 18251) (Lactobacillus fermentum).